A 342-amino-acid polypeptide reads, in one-letter code: Anthranilate phosphoribosyltransferase (342 aa).

Residues Gly-84, 87–88 (GD), Thr-92, 94–97 (NITT), 112–120 (KHGNRSVSS), and Ser-124 each bind 5-phospho-alpha-D-ribose 1-diphosphate. Gly-84 is an anthranilate binding site. Thr-96 lines the Mg(2+) pocket. Asn-115 is a binding site for anthranilate. Arg-170 contributes to the anthranilate binding site. Positions 228 and 229 each coordinate Mg(2+).

The protein belongs to the anthranilate phosphoribosyltransferase family. As to quaternary structure, homodimer. Requires Mg(2+) as cofactor.

It catalyses the reaction N-(5-phospho-beta-D-ribosyl)anthranilate + diphosphate = 5-phospho-alpha-D-ribose 1-diphosphate + anthranilate. It participates in amino-acid biosynthesis; L-tryptophan biosynthesis; L-tryptophan from chorismate: step 2/5. Its function is as follows. Catalyzes the transfer of the phosphoribosyl group of 5-phosphorylribose-1-pyrophosphate (PRPP) to anthranilate to yield N-(5'-phosphoribosyl)-anthranilate (PRA). In Corynebacterium efficiens (strain DSM 44549 / YS-314 / AJ 12310 / JCM 11189 / NBRC 100395), this protein is Anthranilate phosphoribosyltransferase.